The primary structure comprises 248 residues: Proteasome subunit alpha type-5 (248 aa).

The protein belongs to the peptidase T1A family. In terms of assembly, the 26S proteasome consists of a 20S proteasome core and two 19S regulatory subunits. The 20S proteasome core is composed of 28 subunits that are arranged in four stacked rings, resulting in a barrel-shaped structure. The two end rings are each formed by seven alpha subunits, and the two central rings are each formed by seven beta subunits. The catalytic chamber with the active sites is on the inside of the barrel.

Its subcellular location is the cytoplasm. The protein resides in the nucleus. Its function is as follows. The proteasome is a multicatalytic proteinase complex which is characterized by its ability to cleave peptides with Arg, Phe, Tyr, Leu, and Glu adjacent to the leaving group at neutral or slightly basic pH. The proteasome has an ATP-dependent proteolytic activity. The chain is Proteasome subunit alpha type-5 (pas-5) from Caenorhabditis elegans.